A 51-amino-acid polypeptide reads, in one-letter code: uncharacterized protein (51 aa).

This protein is non-essential for virus function. This is an uncharacterized protein from Sulfolobus spindle-shape virus 1 (SSV1).